The following is a 234-amino-acid chain: Elongation factor Tu, chloroplastic (234 aa).

The region spanning 1–125 (KNMITGAAQM…KVDSYIPTPE (125 aa)) is the tr-type G domain. 47 to 50 (NKQD) contributes to the GTP binding site.

The protein belongs to the TRAFAC class translation factor GTPase superfamily. Classic translation factor GTPase family. EF-Tu/EF-1A subfamily.

The protein localises to the plastid. It localises to the chloroplast. It carries out the reaction GTP + H2O = GDP + phosphate + H(+). Functionally, GTP hydrolase that promotes the GTP-dependent binding of aminoacyl-tRNA to the A-site of ribosomes during protein biosynthesis. In Pandorina morum (Freshwater green alga), this protein is Elongation factor Tu, chloroplastic (tufA).